A 263-amino-acid chain; its full sequence is Serine protease ami (263 aa).

Positions 1-21 (MNISRVLFAVVLVLTVSTYEC) are cleaved as a signal peptide. Residue Asn2 is glycosylated (N-linked (GlcNAc...) asparagine). A propeptide spans 22-26 (RPRGR) (activation peptide). One can recognise a Peptidase S1 domain in the interval 27–254 (ILGGQDSKEK…YKSWIMETMY (228 aa)). Cysteines 52 and 68 form a disulfide. The active-site Charge relay system is His67. Asn73, Asn74, and Asn108 each carry an N-linked (GlcNAc...) asparagine glycan. Asp115 serves as the catalytic Charge relay system. 3 disulfides stabilise this stretch: Cys149/Cys215, Cys180/Cys196, and Cys205/Cys230. Ser209 acts as the Charge relay system in catalysis. The N-linked (GlcNAc...) asparagine glycan is linked to Asn255.

This sequence belongs to the peptidase S1 family. As to expression, in the embryo, localizes to paraxial regions at the neurula stage and anterior ventral regions at the tailbud stage. From the late tailbud to tadpole stage, expressed along the forming blood vessels including the anterior cardinal veins, posterior cardinal veins, intersomitic veins, dorsal longitudinal anastomosing vessel, dorsal aorta, pronephric sinus and most prominently around the vascular vitelline network, where expression shows left-right asymmetry in the stage 42 embryo. Localizes to endothelial cells. In adults, shows highest expression in liver with moderate levels of expression in the fat body, lung, gut and vessels. Weakly expressed in adult heart, muscle, testis and ovary.

The protein resides in the secreted. In terms of biological role, probable serine protease. The protein is Serine protease ami of Xenopus laevis (African clawed frog).